We begin with the raw amino-acid sequence, 277 residues long: Release factor glutamine methyltransferase (277 aa).

Residues 117–121 (GTGTG), aspartate 140, tryptophan 168, and asparagine 183 contribute to the S-adenosyl-L-methionine site. 183-186 (NPPY) contacts substrate.

The protein belongs to the protein N5-glutamine methyltransferase family. PrmC subfamily.

It catalyses the reaction L-glutaminyl-[peptide chain release factor] + S-adenosyl-L-methionine = N(5)-methyl-L-glutaminyl-[peptide chain release factor] + S-adenosyl-L-homocysteine + H(+). Its function is as follows. Methylates the class 1 translation termination release factors RF1/PrfA and RF2/PrfB on the glutamine residue of the universally conserved GGQ motif. This is Release factor glutamine methyltransferase from Shigella flexneri.